The sequence spans 330 residues: RNA polymerase sigma factor RpoS (330 aa).

The tract at residues 56–89 (DATQLYLGEIGYSPLLTAEEEVYFARRALRGDVA) is sigma-70 factor domain-1. The interval 94 to 164 (MIESNLRLVV…ERAIMNQTRT (71 aa)) is sigma-70 factor domain-2. The short motif at 118–121 (DLIE) is the Interaction with polymerase core subunit RpoC element. The tract at residues 174-249 (ELNVYLRTAR…DEKENGPEDT (76 aa)) is sigma-70 factor domain-3. Residues 262–315 (WLFELNAKQREVLARRFGLLGYEAATLEDVGREIGLTRERVRQIQVEGLRRLRE) are sigma-70 factor domain-4. Positions 288-307 (LEDVGREIGLTRERVRQIQV) form a DNA-binding region, H-T-H motif.

It belongs to the sigma-70 factor family. RpoS subfamily. As to quaternary structure, interacts with the RNA polymerase core enzyme.

It localises to the cytoplasm. In terms of biological role, sigma factors are initiation factors that promote the attachment of RNA polymerase to specific initiation sites and are then released. This sigma factor is the master transcriptional regulator of the stationary phase and the general stress response. This Salmonella dublin protein is RNA polymerase sigma factor RpoS.